A 61-amino-acid polypeptide reads, in one-letter code: Metallothionein-1C (61 aa).

Positions 1–29 (MDPNCSCSTGGSCSCAGSCTCKACRCTSC) are beta. A divalent metal cation contacts are provided by cysteine 5, cysteine 7, cysteine 13, cysteine 15, cysteine 19, cysteine 21, cysteine 24, cysteine 26, cysteine 29, cysteine 33, cysteine 34, cysteine 36, cysteine 37, cysteine 41, cysteine 44, cysteine 48, cysteine 50, cysteine 57, cysteine 59, and cysteine 60. The tract at residues 30–61 (KKSCCSCCPAGCARCAQGCICKGASDKCSCCA) is alpha.

Belongs to the metallothionein superfamily. Type 1 family. Monomer.

Metallothioneins have a high content of cysteine residues that bind various heavy metals; these proteins are transcriptionally regulated by both heavy metals and glucocorticoids. The sequence is that of Metallothionein-1C (MT1C) from Sus scrofa (Pig).